The sequence spans 387 residues: MKRITILGSTGSIGTNSLEVISRFPEQFCATYLSAGSNVKLLAEQAKRFRPKGVVIMNESLEGELRSLLAGESIEIMSGEEGLCEISRRSDTDFVIGSVVGFAGLKPTVEALKAGKDVGLANKETLVVGGEIITSLVEEHGCKMLPVDSEHSAIFQCLVGEAPEFVGKIILTASGGPFRTWEKSRFEQITVADALNHPNWKMGSKITIDSATMMNKGLEVIEAKWLFNLDYDRIDVVVHPQSIVHSMVEFKDGSVKAQLGVPDMKIPIQYALTYPERFYADYERLDWRNISKLDFETPDTEKFRCLALAYEAGRKGGSYPAVLNAANEVAVELFLKEKISFLNISELIDDAMQAHDGRAASSIDDLIDIDAQTRRYVYDKADAMHAV.

NADPH is bound by residues Thr10, Gly11, Ser12, Ile13, Gly36, Asn38, and Asn122. Residue Lys123 participates in 1-deoxy-D-xylulose 5-phosphate binding. Glu124 provides a ligand contact to NADPH. Residue Asp148 participates in Mn(2+) binding. Residues Ser149, Glu150, Ser174, and His197 each coordinate 1-deoxy-D-xylulose 5-phosphate. A Mn(2+)-binding site is contributed by Glu150. Residue Gly203 participates in NADPH binding. 4 residues coordinate 1-deoxy-D-xylulose 5-phosphate: Ser210, Asn215, Lys216, and Glu219. Glu219 provides a ligand contact to Mn(2+).

Belongs to the DXR family. Mg(2+) serves as cofactor. Requires Mn(2+) as cofactor.

The catalysed reaction is 2-C-methyl-D-erythritol 4-phosphate + NADP(+) = 1-deoxy-D-xylulose 5-phosphate + NADPH + H(+). Its pathway is isoprenoid biosynthesis; isopentenyl diphosphate biosynthesis via DXP pathway; isopentenyl diphosphate from 1-deoxy-D-xylulose 5-phosphate: step 1/6. Its function is as follows. Catalyzes the NADPH-dependent rearrangement and reduction of 1-deoxy-D-xylulose-5-phosphate (DXP) to 2-C-methyl-D-erythritol 4-phosphate (MEP). This Chloroherpeton thalassium (strain ATCC 35110 / GB-78) protein is 1-deoxy-D-xylulose 5-phosphate reductoisomerase.